A 164-amino-acid polypeptide reads, in one-letter code: Large ribosomal subunit protein bL9 (164 aa).

This sequence belongs to the bacterial ribosomal protein bL9 family.

Its function is as follows. Binds to the 23S rRNA. This is Large ribosomal subunit protein bL9 from Borrelia hermsii (strain HS1 / DAH).